A 501-amino-acid chain; its full sequence is Cytochrome P450 71D6 (501 aa).

Cysteine 442 lines the heme pocket.

It belongs to the cytochrome P450 family. The cofactor is heme.

The polypeptide is Cytochrome P450 71D6 (CYP71D6) (Solanum chacoense (Chaco potato)).